The sequence spans 409 residues: NADH-quinone oxidoreductase subunit D (409 aa).

It belongs to the complex I 49 kDa subunit family. As to quaternary structure, NDH-1 is composed of 14 different subunits. Subunits NuoB, C, D, E, F, and G constitute the peripheral sector of the complex.

It is found in the cell inner membrane. The catalysed reaction is a quinone + NADH + 5 H(+)(in) = a quinol + NAD(+) + 4 H(+)(out). Functionally, NDH-1 shuttles electrons from NADH, via FMN and iron-sulfur (Fe-S) centers, to quinones in the respiratory chain. The immediate electron acceptor for the enzyme in this species is believed to be ubiquinone. Couples the redox reaction to proton translocation (for every two electrons transferred, four hydrogen ions are translocated across the cytoplasmic membrane), and thus conserves the redox energy in a proton gradient. The protein is NADH-quinone oxidoreductase subunit D of Sulfurovum sp. (strain NBC37-1).